Consider the following 85-residue polypeptide: Probable small nuclear ribonucleoprotein G (85 aa).

In terms of domain architecture, Sm spans 6 to 78 (QADPDLTKLL…ILLMEPLESM (73 aa)).

The protein belongs to the snRNP Sm proteins family. In terms of assembly, core component of the spliceosomal U1, U2, U4 and U5 small nuclear ribonucleoproteins (snRNPs), the building blocks of the spliceosome. Most spliceosomal snRNPs contain a common set of Sm proteins, SNRPB, SNRPD1, SNRPD2, SNRPD3, SNRPE, SNRPF and SNRPG that assemble in a heptameric protein ring on the Sm site of the small nuclear RNA to form the core snRNP. Component of the U1 snRNP. Component of the U4/U6-U5 tri-snRNP complex. Component of the U7 snRNP complex. Component of the U11/U12 snRNPs that are part of the U12-type spliceosome.

The protein resides in the cytoplasm. Its subcellular location is the cytosol. It localises to the nucleus. In terms of biological role, plays a role in pre-mRNA splicing as a core component of the spliceosomal U1, U2, U4 and U5 small nuclear ribonucleoproteins (snRNPs), the building blocks of the spliceosome. Component of both the pre-catalytic spliceosome B complex and activated spliceosome C complexes. Is also a component of the minor U12 spliceosome. The polypeptide is Probable small nuclear ribonucleoprotein G (snrpG) (Dictyostelium discoideum (Social amoeba)).